The chain runs to 169 residues: Nucleoside diphosphate kinase 3 (169 aa).

The ADP site is built by Lys-29, Arg-105, Thr-111, Arg-122, Val-129, and Asn-132. Residue His-135 is the Pros-phosphohistidine intermediate of the active site.

This sequence belongs to the NDK family. In terms of assembly, homohexamer. Interacts (via its N-terminal region) with KAT5; this interaction enables recruitment of NME3 at DNA damage sites where it plays a role in the repair of DNA. Found in association with several ciliary nephronophthisis proteins, including NEK8, CEP164, ANKS6. Mg(2+) is required as a cofactor.

It localises to the mitochondrion outer membrane. It is found in the cytoplasm. Its subcellular location is the cytoskeleton. The protein resides in the cilium basal body. The catalysed reaction is a 2'-deoxyribonucleoside 5'-diphosphate + ATP = a 2'-deoxyribonucleoside 5'-triphosphate + ADP. It carries out the reaction a ribonucleoside 5'-diphosphate + ATP = a ribonucleoside 5'-triphosphate + ADP. Catalyzes the phosphorylation of ribonucleosides and deoxyribonucleoside diphosphates, other than ATP, into the corresponding triphosphates with ATP as the major phosphate donor. The ATP gamma phosphate is transferred to the nucleoside diphosphate beta phosphate via a ping-pong mechanism, using a phosphorylated active-site intermediate. Through the catalyzed exchange of gamma-phosphate between di- and triphosphonucleosides participates in regulation of intracellular nucleotide homeostasis. Inhibits granulocyte differentiation. May be required for ciliary function during renal development. Its function is as follows. Independently of its kinase activity, facilitates mitochondrial tethering prior to membrane fusion through its direct membrane-binding and hexamerization. Implicated in repair of both single- and double-stranded breaks in DNA through its association with the ribonucleotide reductase complex (RNR complex) via its interaction with the histone acetyltransferase KAT5, this interaction enables recruitment of NME3 at DNA damage sites where it plays a role in the repair of DNA, independently of its kinase activity. The chain is Nucleoside diphosphate kinase 3 from Homo sapiens (Human).